The sequence spans 421 residues: Proton extrusion protein PxcA (421 aa).

A disordered region spans residues 124 to 153; that stretch reads PTVHSSNPDDSQLMTSKNNSKPVPDPESDD. The span at 125–144 shows a compositional bias: polar residues; it reads TVHSSNPDDSQLMTSKNNSK. 4 helical membrane-spanning segments follow: residues 203–223, 298–318, 345–365, and 381–401; these read FVLL…SFIV, AIKN…LLIS, IIIL…WEVI, and FIFL…KYWI.

The protein belongs to the CemA family.

It is found in the cell inner membrane. Functionally, required for H(+) efflux immediately after light irradiation to form a rapid H(+) concentration gradient across the thylakoid membranes. Together with PxcL, contributes to transient H(+) uptake following dark to light transition. This chain is Proton extrusion protein PxcA, found in Synechococcus sp. (strain ATCC 27144 / PCC 6301 / SAUG 1402/1) (Anacystis nidulans).